The primary structure comprises 403 residues: Leu/Ile/Val-binding protein homolog 8 (403 aa).

An N-terminal signal peptide occupies residues 1–26; the sequence is MRLSRLLIGASLGVALSSTVFTAALA.

Belongs to the leucine-binding protein family.

Functionally, component of an amino-acid transport system. The protein is Leu/Ile/Val-binding protein homolog 8 of Brucella melitensis biotype 1 (strain ATCC 23456 / CCUG 17765 / NCTC 10094 / 16M).